We begin with the raw amino-acid sequence, 58 residues long: Large ribosomal subunit protein uL30 (58 aa).

It belongs to the universal ribosomal protein uL30 family. Part of the 50S ribosomal subunit.

The protein is Large ribosomal subunit protein uL30 of Parabacteroides distasonis (strain ATCC 8503 / DSM 20701 / CIP 104284 / JCM 5825 / NCTC 11152).